The following is a 326-amino-acid chain: uncharacterized protein (326 aa).

127-134 provides a ligand contact to ATP; that stretch reads GATGSGKS.

It belongs to the GSP E family.

This is an uncharacterized protein from Escherichia coli (strain K12).